A 1245-amino-acid polypeptide reads, in one-letter code: Trafficking protein particle complex II-specific subunit 130 homolog (1245 aa).

Disordered stretches follow at residues 488-524 (GDGS…TSLP) and 884-903 (HVGG…TRKV). Composition is skewed to low complexity over residues 495 to 507 (ANSK…SASN) and 888 to 898 (TDASKTSSSST).

Belongs to the TMEM1 family. As to quaternary structure, part of the multisubunit TRAPP (transport protein particle) II complex composed of BET3, BET5, TRS20, TRS23, TRS31, TRS33, TRS65, TRS85, TRS120 and TRS130.

The protein localises to the golgi apparatus. It is found in the trans-Golgi network. It localises to the early endosome. Its function is as follows. Specific subunit of the TRAPP II complex, a highly conserved vesicle tethering complex that is required for the proper transport of proteins in post-Golgi trafficking pathways to the growing cell plate in mitotic active cells. The chain is Trafficking protein particle complex II-specific subunit 130 homolog from Oryza sativa subsp. japonica (Rice).